Reading from the N-terminus, the 450-residue chain is D-inositol 3-phosphate glycosyltransferase (450 aa).

1D-myo-inositol 3-phosphate is bound at residue histidine 21. UDP-N-acetyl-alpha-D-glucosamine contacts are provided by residues 27–28 and glycine 35; that span reads QP. Residues 32 to 37, lysine 90, tyrosine 123, threonine 147, and arginine 167 each bind 1D-myo-inositol 3-phosphate; that span reads DAGGMN. UDP-N-acetyl-alpha-D-glucosamine-binding residues include arginine 241, lysine 246, and valine 307. The Mg(2+) site is built by tyrosine 316, arginine 317, and alanine 319. UDP-N-acetyl-alpha-D-glucosamine contacts are provided by glutamate 329 and glutamate 337. Threonine 343 serves as a coordination point for Mg(2+).

Belongs to the glycosyltransferase group 1 family. MshA subfamily. As to quaternary structure, homodimer.

It carries out the reaction 1D-myo-inositol 3-phosphate + UDP-N-acetyl-alpha-D-glucosamine = 1D-myo-inositol 2-acetamido-2-deoxy-alpha-D-glucopyranoside 3-phosphate + UDP + H(+). Catalyzes the transfer of a N-acetyl-glucosamine moiety to 1D-myo-inositol 3-phosphate to produce 1D-myo-inositol 2-acetamido-2-deoxy-glucopyranoside 3-phosphate in the mycothiol biosynthesis pathway. The polypeptide is D-inositol 3-phosphate glycosyltransferase (Geodermatophilus obscurus (strain ATCC 25078 / DSM 43160 / JCM 3152 / CCUG 61914 / KCC A-0152 / KCTC 9177 / NBRC 13315 / NRRL B-3577 / G-20)).